Reading from the N-terminus, the 318-residue chain is NADH-ubiquinone oxidoreductase chain 1 (318 aa).

8 consecutive transmembrane segments (helical) span residues 2–22, 70–90, 100–120, 136–156, 172–192, 222–242, 253–273, and 294–314; these read FMIN…FLTL, MFII…SPLP, LGVL…LWSG, VAQT…VLLM, LWLL…TLAE, LFFL…AILF, ELYT…FLWI, and LPLT…TASI.

The protein belongs to the complex I subunit 1 family. In terms of assembly, core subunit of respiratory chain NADH dehydrogenase (Complex I) which is composed of 45 different subunits.

It localises to the mitochondrion inner membrane. It carries out the reaction a ubiquinone + NADH + 5 H(+)(in) = a ubiquinol + NAD(+) + 4 H(+)(out). Core subunit of the mitochondrial membrane respiratory chain NADH dehydrogenase (Complex I) which catalyzes electron transfer from NADH through the respiratory chain, using ubiquinone as an electron acceptor. Essential for the catalytic activity and assembly of complex I. The protein is NADH-ubiquinone oxidoreductase chain 1 (MT-ND1) of Balaenoptera physalus (Fin whale).